The primary structure comprises 459 residues: MAP kinase-interacting serine/threonine-protein kinase 2 (459 aa).

A disordered region spans residues 37-67 (DFSPQCEARPDMPSSQPIDIPDAKKRGRKKK). Residues 60-66 (KKRGRKK) carry the Nuclear localization signal motif. S74 is subject to Phosphoserine. In terms of domain architecture, Protein kinase spans 84 to 368 (QLQEDVLGEG…AAQVLQHPWV (285 aa)). ATP is bound by residues 90-98 (LGEGAHARV) and K113. 160-162 (EKM) contributes to the staurosporine binding site. D205 (proton acceptor) is an active-site residue. Residue E209 coordinates staurosporine. A phosphothreonine mark is found at T244 and T249. Residues C299, C311, and C314 each coordinate Zn(2+). Residue T379 is modified to Phosphothreonine. A phosphoserine mark is found at S431 and S434. The MAP kinase binding signature appears at 438–442 (LAQRR). Position 446 is a phosphoserine (S446). Position 450 is a phosphothreonine (T450).

The protein belongs to the protein kinase superfamily. CAMK Ser/Thr protein kinase family. Interacts with ESR2 and EIF4E in the nucleus. Monomer. Interacts with the C-terminal regions of EIF4G1 and EIF4G2; this interaction is promoted when MAPK pathways are repressed but repressed upon ERK proteins activation. Also binds to dephosphorylated MAPK3/ERK1 and MAPK1/ERK2. Interaction with phosphorylated MAPK3/ERK1 and MAPK1/ERK2 protects it from dephosphorylation and inactivation. Mg(2+) serves as cofactor. It depends on Zn(2+) as a cofactor. Dual phosphorylation of Thr-244 and Thr-249 activates the kinase. Phosphorylation of Thr-379 activates the kinase. Phosphorylated upon arsenic trioxide As(2)O(3) treatment. Phosphorylated by MAPK1/ERK2, MAPK11 and MAPK14. Dephosphorylated by PP2A. In terms of tissue distribution, ubiquitously expressed in all tissues examined, with high levels in skeletal muscle and low levels in brain.

It localises to the cytoplasm. The protein resides in the nucleus. The protein localises to the PML body. It catalyses the reaction L-seryl-[protein] + ATP = O-phospho-L-seryl-[protein] + ADP + H(+). It carries out the reaction L-threonyl-[protein] + ATP = O-phospho-L-threonyl-[protein] + ADP + H(+). Inhibited by CGP57380 and staurosporine. Its function is as follows. Serine/threonine-protein kinase that phosphorylates SFPQ/PSF, HNRNPA1 and EIF4E. May play a role in the response to environmental stress and cytokines. Appears to regulate translation by phosphorylating EIF4E, thus increasing the affinity of this protein for the 7-methylguanosine-containing mRNA cap. Required for mediating PP2A-inhibition-induced EIF4E phosphorylation. Triggers EIF4E shuttling from cytoplasm to nucleus. Enhances the formation of EIF4F complex in pachytene spermatocytes, thus promoting mRNA translation during spermatogenesis. Displays a high basal kinase activity. Acts as a mediator of the suppressive effects of IFNgamma on hematopoiesis. Negative regulator for signals that control generation of arsenic trioxide As(2)O(3)-dependent apoptosis and anti-leukemic responses. Involved in anti-apoptotic signaling in response to serum withdrawal. The chain is MAP kinase-interacting serine/threonine-protein kinase 2 (Mknk2) from Mus musculus (Mouse).